The primary structure comprises 204 residues: MLTLALPKGRLAEETALLLLSKGWLKNLPSEGSKELTYVSEDKRIRLLFVRSQDVCTYVEEAAADVGIVGWDIIREGGFDLIAPVDLKLGACRLSLASFPDFDLFAKRSKVRVATKYPNLTREYFFSKGISCEIIKLYGSIELAPIVGLSDCIVDLVSTGGTLKANGLKEFESILFSTARLVSNRSSFYHKHAELRSLIESLEN.

The protein belongs to the ATP phosphoribosyltransferase family. Short subfamily. Heteromultimer composed of HisG and HisZ subunits.

The protein resides in the cytoplasm. It catalyses the reaction 1-(5-phospho-beta-D-ribosyl)-ATP + diphosphate = 5-phospho-alpha-D-ribose 1-diphosphate + ATP. It functions in the pathway amino-acid biosynthesis; L-histidine biosynthesis; L-histidine from 5-phospho-alpha-D-ribose 1-diphosphate: step 1/9. Functionally, catalyzes the condensation of ATP and 5-phosphoribose 1-diphosphate to form N'-(5'-phosphoribosyl)-ATP (PR-ATP). Has a crucial role in the pathway because the rate of histidine biosynthesis seems to be controlled primarily by regulation of HisG enzymatic activity. This is ATP phosphoribosyltransferase from Leptospira biflexa serovar Patoc (strain Patoc 1 / Ames).